We begin with the raw amino-acid sequence, 602 residues long: Protein DGS1, mitochondrial (602 aa).

Helical transmembrane passes span 300 to 320 (LYWV…IWLL) and 465 to 485 (INFA…MLTV).

Component of a mitochondrial large protein complex that contains, at least, MIC60, DGS1, TOM40 (e.g. TOM40-1), TOM20 proteins (e.g. TOM20-2), and petC/RISP.

Its subcellular location is the mitochondrion outer membrane. Functionally, involved in galactoglycerolipid biosynthesis. Contributes to an intracellular signal that regulates an alternative DGD1-independent galactoglycerolipid biosynthesis pathway in chloroplasts. Being involved in mitochondrial lipid homeostasis, modulates mitochondrion biogenesis and physiology, as well as stress responses. This chain is Protein DGS1, mitochondrial, found in Arabidopsis thaliana (Mouse-ear cress).